The chain runs to 487 residues: Betaine aldehyde dehydrogenase (487 aa).

K(+) is bound by residues serine 26 and aspartate 93. Position 150 to 152 (150 to 152 (GAW)) interacts with NAD(+). Residue lysine 162 is the Charge relay system of the active site. Residues 176-179 (KPSE) and 229-232 (SVPT) contribute to the NAD(+) site. Leucine 244 is a K(+) binding site. Catalysis depends on glutamate 250, which acts as the Proton acceptor. The NAD(+) site is built by glycine 252, cysteine 284, and glutamate 384. Cysteine 284 serves as the catalytic Nucleophile. Cysteine sulfenic acid (-SOH) is present on cysteine 284. Lysine 454 and glycine 457 together coordinate K(+). Glutamate 461 functions as the Charge relay system in the catalytic mechanism.

The protein belongs to the aldehyde dehydrogenase family. In terms of assembly, dimer of dimers. Requires K(+) as cofactor.

It carries out the reaction betaine aldehyde + NAD(+) + H2O = glycine betaine + NADH + 2 H(+). Its pathway is amine and polyamine biosynthesis; betaine biosynthesis via choline pathway; betaine from betaine aldehyde: step 1/1. Involved in the biosynthesis of the osmoprotectant glycine betaine. Catalyzes the irreversible oxidation of betaine aldehyde to the corresponding acid. This Rhizobium etli (strain ATCC 51251 / DSM 11541 / JCM 21823 / NBRC 15573 / CFN 42) protein is Betaine aldehyde dehydrogenase.